The sequence spans 181 residues: Adenylate kinase (181 aa).

10 to 15 (GAGKGT) contacts ATP. An NMP region spans residues 30–59 (STGDLFRSNISEGTELGLQAKQYLDAGDLV). AMP contacts are provided by residues T31, R36, 57–59 (DLV), 85–88 (GFPR), and Q92. Positions 126-132 (GRGRADD) are LID. Residue R127 participates in ATP binding. Positions 129 and 140 each coordinate AMP. G166 contributes to the ATP binding site.

Belongs to the adenylate kinase family. In terms of assembly, monomer.

The protein resides in the cytoplasm. It carries out the reaction AMP + ATP = 2 ADP. It functions in the pathway purine metabolism; AMP biosynthesis via salvage pathway; AMP from ADP: step 1/1. Catalyzes the reversible transfer of the terminal phosphate group between ATP and AMP. Plays an important role in cellular energy homeostasis and in adenine nucleotide metabolism. This is Adenylate kinase from Mycobacteroides abscessus (strain ATCC 19977 / DSM 44196 / CCUG 20993 / CIP 104536 / JCM 13569 / NCTC 13031 / TMC 1543 / L948) (Mycobacterium abscessus).